Reading from the N-terminus, the 454-residue chain is Inner membrane transport protein YajR (454 aa).

At 1-14 (MNDYKMTPGERRAT) the chain is on the periplasmic side. The chain crosses the membrane as a helical span at residues 15–35 (WGLGTVFSLRMLGMFMVLPVL). The Cytoplasmic portion of the chain corresponds to 36–47 (TTYGMALQGASE). The helical transmembrane segment at 48–68 (ALIGIAIGIYGLTQAVFQIPF) threads the bilayer. At 69–84 (GLLSDRIGRKPLIVGG) the chain is on the periplasmic side. A helical membrane pass occupies residues 85–105 (LAVFAAGSVIAALSDSIWGII). Topologically, residues 106–137 (LGRALQGSGAIAAAVMALLSDLTREQNRTKAM) are cytoplasmic. A helical membrane pass occupies residues 138 to 158 (AFIGVSFGITFAIAMVLGPII). Residues 159–165 (THKLGLH) lie on the Periplasmic side of the membrane. Residues 166 to 186 (ALFWMIAILATTGIALTIWVV) form a helical membrane-spanning segment. Topologically, residues 187 to 216 (PNSSTHVLNRESGMVKGSFSKVLAEPRLLK) are cytoplasmic. A helical membrane pass occupies residues 217–237 (LNFGIMCLHILLMSTFVALPG). The Periplasmic segment spans residues 238-252 (QLADAGFPAAEHWKV). A helical transmembrane segment spans residues 253 to 273 (YLATMLIAFGSVVPFIIYAEV). Over 274 to 279 (KRKMKQ) the chain is Cytoplasmic. Residues 280–300 (VFVFCVGLIVVAEIVLWNAQT) traverse the membrane as a helical segment. The Periplasmic portion of the chain corresponds to 301 to 306 (QFWQLV). Residues 307–327 (VGVQLFFVAFNLMEALLPSLI) traverse the membrane as a helical segment. Topologically, residues 328-340 (SKESPAGYKGTAM) are cytoplasmic. A helical membrane pass occupies residues 341-361 (GVYSTSQFLGVAIGGSLGGWI). Residues 362–363 (NG) lie on the Periplasmic side of the membrane. Residues 364–384 (MFDGQGVFLAGAMLAAVWLTV) traverse the membrane as a helical segment. The Cytoplasmic portion of the chain corresponds to 385 to 454 (ASTMKEPPYV…FEIEQAIRQA (70 aa)).

The protein belongs to the major facilitator superfamily.

Its subcellular location is the cell inner membrane. The protein is Inner membrane transport protein YajR (yajR) of Escherichia coli (strain K12).